We begin with the raw amino-acid sequence, 428 residues long: Serine--tRNA ligase (428 aa).

Residue 235-237 (TAE) coordinates L-serine. An ATP-binding site is contributed by 266–268 (RSE). Glu-289 contributes to the L-serine binding site. 353–356 (EISS) provides a ligand contact to ATP. Residue Ser-389 participates in L-serine binding.

This sequence belongs to the class-II aminoacyl-tRNA synthetase family. Type-1 seryl-tRNA synthetase subfamily. Homodimer. The tRNA molecule binds across the dimer.

It localises to the cytoplasm. The catalysed reaction is tRNA(Ser) + L-serine + ATP = L-seryl-tRNA(Ser) + AMP + diphosphate + H(+). The enzyme catalyses tRNA(Sec) + L-serine + ATP = L-seryl-tRNA(Sec) + AMP + diphosphate + H(+). It functions in the pathway aminoacyl-tRNA biosynthesis; selenocysteinyl-tRNA(Sec) biosynthesis; L-seryl-tRNA(Sec) from L-serine and tRNA(Sec): step 1/1. Catalyzes the attachment of serine to tRNA(Ser). Is also able to aminoacylate tRNA(Sec) with serine, to form the misacylated tRNA L-seryl-tRNA(Sec), which will be further converted into selenocysteinyl-tRNA(Sec). This is Serine--tRNA ligase from Pasteurella multocida (strain Pm70).